Here is a 310-residue protein sequence, read N- to C-terminus: p-hydroxybenzoic acid efflux pump subunit AaeA (310 aa).

A helical membrane pass occupies residues 12–32 (AITLVLVILAFIAIFRAWVYY).

It belongs to the membrane fusion protein (MFP) (TC 8.A.1) family.

It is found in the cell inner membrane. Functionally, forms an efflux pump with AaeB. In Salmonella gallinarum (strain 287/91 / NCTC 13346), this protein is p-hydroxybenzoic acid efflux pump subunit AaeA.